Consider the following 206-residue polypeptide: uncharacterized protein (206 aa).

A helical membrane pass occupies residues 21 to 43; it reads VPINITMSICALTALLKSYSITG.

The protein resides in the membrane. This is an uncharacterized protein from Acanthamoeba polyphaga (Amoeba).